The sequence spans 357 residues: MRSPQSILAIVAFATTAIAGVVPSTEKRADDIPELDVKLTQVEGTLVKAVVTNNGDEDLNILNLNFFKDTAPVKKVSVYSQGAEVPFAGVRLRHKTSGLSPEVFTYLGPGESFEDEFDVAFTADLSQGGRIVVKAEGFASTTDTDGDTLSGVVHYKSNELEIDVDGKAAAKNFASLNQFSKRTRLTGCTGSRGSAATRAIRDSAPLAAMAAGAARNGGRAFTQYFKTNDQQVRNLVAARFDAVAREASSTTSGRTTYYCDDPYGICSPNVLAYALPSRNIISNCPAYYSLSHLTWRCHGQDRVTTSIHEFTHTPGVFSPGTDDLAYGHQAATSLSTWEALNNADSFSLFANAVYLGC.

An N-terminal signal peptide occupies residues methionine 1 to alanine 19. Positions glycine 20–arginine 182 are excised as a propeptide. Disulfide bonds link cysteine 188-cysteine 259, cysteine 266-cysteine 284, and cysteine 297-cysteine 357. Histidine 308 is a Zn(2+) binding site. Residue glutamate 309 is part of the active site. The Zn(2+) site is built by histidine 312 and aspartate 323.

It belongs to the peptidase M35 family. Requires Zn(2+) as cofactor.

It is found in the secreted. It carries out the reaction Preferential cleavage of bonds with hydrophobic residues in P1'. Also 3-Asn-|-Gln-4 and 8-Gly-|-Ser-9 bonds in insulin B chain.. In terms of biological role, secreted metalloproteinase that allows assimilation of proteinaceous substrates. Shows high activities on basic nuclear substrates such as histone and protamine. This Ajellomyces dermatitidis (strain ER-3 / ATCC MYA-2586) (Blastomyces dermatitidis) protein is Neutral protease 2 homolog BDCG_00922.